The primary structure comprises 446 residues: Probable glycine dehydrogenase (decarboxylating) subunit 1 (446 aa).

This sequence belongs to the GcvP family. N-terminal subunit subfamily. As to quaternary structure, the glycine cleavage system is composed of four proteins: P, T, L and H. In this organism, the P 'protein' is a heterodimer of two subunits.

It carries out the reaction N(6)-[(R)-lipoyl]-L-lysyl-[glycine-cleavage complex H protein] + glycine + H(+) = N(6)-[(R)-S(8)-aminomethyldihydrolipoyl]-L-lysyl-[glycine-cleavage complex H protein] + CO2. Its function is as follows. The glycine cleavage system catalyzes the degradation of glycine. The P protein binds the alpha-amino group of glycine through its pyridoxal phosphate cofactor; CO(2) is released and the remaining methylamine moiety is then transferred to the lipoamide cofactor of the H protein. In Protochlamydia amoebophila (strain UWE25), this protein is Probable glycine dehydrogenase (decarboxylating) subunit 1.